The chain runs to 382 residues: Glutaminyl-peptide cyclotransferase-like protein (382 aa).

The helical transmembrane segment at 35–55 threads the bilayer; it reads LLPLLLALAVGSAFYTIWSGW. Cysteine 167 and cysteine 191 are joined by a disulfide. Aspartate 186 is a binding site for Zn(2+). The Proton acceptor role is filled by glutamate 225. Glutamate 226 is a binding site for Zn(2+). Aspartate 269 (proton acceptor) is an active-site residue. Residue histidine 351 coordinates Zn(2+).

This sequence belongs to the glutaminyl-peptide cyclotransferase family.

It localises to the golgi apparatus membrane. It carries out the reaction N-terminal L-glutaminyl-[peptide] = N-terminal 5-oxo-L-prolyl-[peptide] + NH4(+). In terms of biological role, responsible for the biosynthesis of pyroglutamyl peptides. This Macaca fascicularis (Crab-eating macaque) protein is Glutaminyl-peptide cyclotransferase-like protein (QPCTL).